The sequence spans 166 residues: MTLEERVEALEKELQEMKDIEAIKELKGKYFRCLDGKMWDELETTLSPNIVTSYSNGKLVFHSPKEVTDYLKSSMPKEEISMHMGHTPEITIDSETTATGRWYLEDRLIFTDGKYKDVGINGGAFYTDKYEKIDGQWYILETGYVRIYEEHFMRDPKIHITMNMHK.

As to quaternary structure, homodimer.

It catalyses the reaction 7alpha,12alpha-dihydroxy-3-oxochol-4-en-24-oyl-CoA = 12alpha-hydroxy-3-oxochola-4,6-dien-24-oyl-CoA + H2O. It carries out the reaction 7alpha-hydroxy-3-oxochol-4-en-24-oyl-CoA = 3-oxochol-4,6-dien-24-oyl-CoA + H2O. The catalysed reaction is 7alpha,12alpha-dihydroxy-3-oxochol-4-en-24-oate = 12alpha-hydroxy-3-oxochola-4,6-dien-24-oate + H2O. The enzyme catalyses 7alpha-hydroxy-3-oxochol-4-en-24-oate = 3-oxochola-4,6-dien-24-oate + H2O. Its pathway is lipid metabolism; bile acid biosynthesis. Its function is as follows. Functions in the bile acid 7alpha-dehydroxylation pathway, which forms secondary bile acids via the 7alpha-dehydroxylation of primary bile acids, and is carried out by intestinal anaerobic bacteria. Catalyzes the dehydration step in this pathway, yielding a 3-oxo-Delta(4,6)-bile acid-CoA intermediate. In vitro, can act on the free bile acids (non CoA-conjugated) 7-alpha,12-alpha-dihydroxy-3-oxochol-4-enoate and 7-alpha-hydroxy-3-oxochol-4-enoate, but not on 7-alpha,12-alpha-dihydroxy-3-oxo-5-beta-cholanate, 3-alpha,7-alpha,12-alpha-trihydroxy-5-beta-cholanate or 7-beta-hydroxy-3-oxochol-4-enoate. The polypeptide is Bile acid 7alpha-dehydratase (Clostridium scindens (strain JCM 10418 / VPI 12708)).